The following is a 281-amino-acid chain: MKRFYKTAFFSEIGSEEVSHFWADTMSSHSPLEQFSILPLIPMNIGNLYFSFTNSSLFMLLTLSLVLLLVNFVTKKGGGNLVPNAWQSLVELIYDFVLNLVNEQIGGLSGNVKQKFFPCILVTFTFLLFCNLQGMIPYSFTVTSHFLITLGLSFSIFIGITIVGFQRNGLHFLSFLLPAGVPLPLAPFLVLLELISYCFRALSLGIRLFANMMAGHSLVKILSGFAWTMLCMNDLFYFIGDLGPLFIVLALTGLELGVAILQAYVFTILICIYLNDAINLH.

6 helical membrane-spanning segments follow: residues F50–V70, F116–I136, H145–F165, F172–L192, V219–I239, and F246–F266.

The protein belongs to the ATPase A chain family. In terms of assembly, F-type ATPases have 2 components, CF(1) - the catalytic core - and CF(0) - the membrane proton channel. CF(1) has five subunits: alpha(3), beta(3), gamma(1), delta(1), epsilon(1). CF(0) has three main subunits: a, b and c.

The protein localises to the mitochondrion inner membrane. In terms of biological role, mitochondrial membrane ATP synthase (F(1)F(0) ATP synthase or Complex V) produces ATP from ADP in the presence of a proton gradient across the membrane which is generated by electron transport complexes of the respiratory chain. F-type ATPases consist of two structural domains, F(1) - containing the extramembraneous catalytic core and F(0) - containing the membrane proton channel, linked together by a central stalk and a peripheral stalk. During catalysis, ATP synthesis in the catalytic domain of F(1) is coupled via a rotary mechanism of the central stalk subunits to proton translocation. Key component of the proton channel; it may play a direct role in the translocation of protons across the membrane. The polypeptide is ATP synthase subunit a (ATP6) (Oenothera berteroana (Bertero's evening primrose)).